The chain runs to 186 residues: Large ribosomal subunit protein uL10 (186 aa).

Part of the ribosomal stalk of the 50S ribosomal subunit. The N-terminus interacts with L11 and the large rRNA to form the base of the stalk. The C-terminus forms an elongated spine to which L12 dimers bind in a sequential fashion forming a multimeric L10(L12)X complex.

Functionally, forms part of the ribosomal stalk, playing a central role in the interaction of the ribosome with GTP-bound translation factors. The protein is Large ribosomal subunit protein uL10 of Rhodopseudomonas palustris (strain ATCC BAA-98 / CGA009).